The chain runs to 311 residues: tRNA dimethylallyltransferase (311 aa).

11 to 18 contacts ATP; sequence GPTAVGKT. 13–18 serves as a coordination point for substrate; the sequence is TAVGKT. The segment at 36–39 is interaction with substrate tRNA; sequence DSMQ.

The protein belongs to the IPP transferase family. In terms of assembly, monomer. Requires Mg(2+) as cofactor.

The enzyme catalyses adenosine(37) in tRNA + dimethylallyl diphosphate = N(6)-dimethylallyladenosine(37) in tRNA + diphosphate. Its function is as follows. Catalyzes the transfer of a dimethylallyl group onto the adenine at position 37 in tRNAs that read codons beginning with uridine, leading to the formation of N6-(dimethylallyl)adenosine (i(6)A). This Clostridioides difficile (strain 630) (Peptoclostridium difficile) protein is tRNA dimethylallyltransferase.